The following is a 616-amino-acid chain: Telomeric repeat-binding factor 2-interacting protein 1 (616 aa).

The region spanning 15-98 (FLDPGGQSMR…QQLDPNDYAI (84 aa)) is the BRCT domain. A Myb-like domain is found at 112–169 (NQGSGRLGYSSEEDAAILKFIEKRQQDAKGNLVWKEMEKRHVTEHSWQSMKDRFLKHL). The tract at residues 174–518 (ADKPTKKSPI…CSHIRETPEE (345 aa)) is disordered. A compositionally biased stretch (low complexity) spans 232–245 (PERASSPPEEPQAA). A compositionally biased stretch (polar residues) spans 246 to 255 (GQPSQASSND). 2 stretches are compositionally biased toward basic and acidic residues: residues 271–288 (ENPR…EHSS) and 344–358 (RSSR…RDIP). Composition is skewed to polar residues over residues 363-382 (EQSS…SDSG) and 397-415 (NANS…ASTP). Residues 431 to 444 (EDSDVMDDSEECEN) are compositionally biased toward acidic residues. Positions 468 to 480 (REPESQAEHHEET) are enriched in basic and acidic residues. The Nuclear localization signal signature appears at 597–613 (SKFGEEEVTRRKSFLAT).

The protein belongs to the RAP1 family. In terms of assembly, homodimer. Component of the shelterin complex (telosome). Interacts with terf2; the interaction is direct.

It is found in the nucleus. The protein resides in the chromosome. The protein localises to the telomere. Acts both as a regulator of telomere function and as a transcription regulator. Involved in the regulation of telomere length and protection as a component of the shelterin complex (telosome). Does not bind DNA directly: recruited to telomeric double-stranded 5'-TTAGGG-3' repeats via its interaction with terf2. Independently of its function in telomeres, also acts as a transcription regulator: recruited to extratelomeric 5'-TTAGGG-3' sites via its association with terf2 or other factors, and regulates gene expression. In Danio rerio (Zebrafish), this protein is Telomeric repeat-binding factor 2-interacting protein 1 (terf2ip).